An 846-amino-acid polypeptide reads, in one-letter code: Putative transcriptional regulator tpeD (846 aa).

A BED-type; degenerate zinc finger spans residues Lys104–Lys166. The tract at residues Arg734–Pro846 is disordered. Residues Pro756 to Ser769 show a composition bias toward acidic residues. A compositionally biased stretch (low complexity) spans Pro773–Ser786. A compositionally biased stretch (acidic residues) spans Pro797–Val809.

It is found in the nucleus. Its function is as follows. Putative transcriptional regulator; part of the gene cluster that mediates the biosynthesis of polyesters containing 2,4-dihydroxy-6-(2-hydroxypropyl)benzoate and 3-hydroxybutyrate moieties, such as talapolyester G, 15G256beta and 15G256beta-2; as well as to oxidized derivatives such as 15G256alpha. This chain is Putative transcriptional regulator tpeD, found in Talaromyces stipitatus (strain ATCC 10500 / CBS 375.48 / QM 6759 / NRRL 1006) (Penicillium stipitatum).